The following is a 186-amino-acid chain: NADH-dependent FMN reductase SfnF (186 aa).

Belongs to the SsuE family.

The enzyme catalyses FMNH2 + NAD(+) = FMN + NADH + 2 H(+). Involved in the dimethyl sulfide degradation pathway. Catalyzes the NADH-dependent reduction of FMN. In Pseudomonas putida (Arthrobacter siderocapsulatus), this protein is NADH-dependent FMN reductase SfnF.